Consider the following 147-residue polypeptide: Receptor activity-modifying protein 3 (147 aa).

The first 22 residues, 1–22 (MATPAQRLHLLPLLLLLCGECA), serve as a signal peptide directing secretion. Residues 23–112 (QVCGCNETGM…CTVDRTHWED (90 aa)) lie on the Extracellular side of the membrane. N-linked (GlcNAc...) asparagine glycans are attached at residues N28, N57, N70, and N102. Disulfide bonds link C39–C71 and C56–C103. The helical transmembrane segment at 113–137 (PPDEVLIPLIAVPVLLTVAMAGLVV) threads the bilayer. Residues 138–147 (WRSKRTDRLL) are Cytoplasmic-facing.

This sequence belongs to the RAMP family. As to quaternary structure, heterodimer of CALCRL and RAMP3; interaction induces allosteric modulation of CALCRL function and ligand specificity for adrenomedullin/ADM and intermedin/ADM2. Heterodimer of CALCR and RAMP3; interaction form the receptor complex AMYR3 for amylin/IAPP. Interacts with GPER1.

It is found in the cell membrane. The protein resides in the membrane. Accessory protein that interacts with and modulates the function of G-protein coupled receptors including calcitonin gene-related peptide type 1 receptor (CALCRL), calcitonin receptor (CALCR) and G-protein coupled estrogen receptor 1 (GPER1). Required for the transport of CALCRL and GPER1 receptors to the plasma membrane. Plays a role in cardioprotection by reducing cardiac hypertrophy and perivascular fibrosis in a GPER1-dependent manner. Together with CALCRL, form a receptor complex for adrenomedullin/ADM and intermedin/ADM2. Together with CALCR, act as a receptor complex for amylin/IAPP. This is Receptor activity-modifying protein 3 from Rattus norvegicus (Rat).